A 659-amino-acid chain; its full sequence is Threonine--tRNA ligase (659 aa).

In terms of domain architecture, TGS spans 1 to 61 (MSAVPELRIT…ADGDVVEEIR (61 aa)). The segment at 260 to 555 (DHRKLGVELD…LLEHYAGAFP (296 aa)) is catalytic. Zn(2+) contacts are provided by cysteine 353, histidine 404, and histidine 532.

This sequence belongs to the class-II aminoacyl-tRNA synthetase family. As to quaternary structure, homodimer. Zn(2+) is required as a cofactor.

Its subcellular location is the cytoplasm. It carries out the reaction tRNA(Thr) + L-threonine + ATP = L-threonyl-tRNA(Thr) + AMP + diphosphate + H(+). Catalyzes the attachment of threonine to tRNA(Thr) in a two-step reaction: L-threonine is first activated by ATP to form Thr-AMP and then transferred to the acceptor end of tRNA(Thr). Also edits incorrectly charged L-seryl-tRNA(Thr). This is Threonine--tRNA ligase from Thermobifida fusca (strain YX).